We begin with the raw amino-acid sequence, 249 residues long: MTHSVVELIEIESAIIQVKMQDRTHKNAFSQELTDDLIQAFEYIRQNPKYKAVILTGYDNYFASGGTQEGLLRIQQGLTKFTDDNLYSLALDCEIPVIAAMQGHGIGGGFVMGLFADIVILSRESVYTANFMKYGFTPGMGATFIVPKKLGFSLAQEILLNAGSYRGADLEKRGVPFKVLPRAEVLDYAVELAQELAEKPRNSLVTLKDHLVAPLRDQLPRVIEQELMMHEKTFHHEEVKSRIKGLYGN.

Residue His230 is part of the active site.

It belongs to the enoyl-CoA hydratase/isomerase family. Homotrimer. Does not form a heterotrimeric complex with PksH.

It localises to the cytoplasm. The protein operates within antibiotic biosynthesis; bacillaene biosynthesis. Its function is as follows. Involved in some intermediate steps for the synthesis of the antibiotic polyketide bacillaene which is involved in secondary metabolism. Catalyzes the decarboxylation of the 3-methylglutaconyl group tethered to PksL to a 3-methylcrotonyl moiety. The chain is Bacillaene synthase decarboxylase PksI (pksI) from Bacillus subtilis (strain 168).